Reading from the N-terminus, the 337-residue chain is Ketol-acid reductoisomerase (NADP(+)) (337 aa).

One can recognise a KARI N-terminal Rossmann domain in the interval 3-183; the sequence is VEVFYDDDAD…GGTRAGVIKT (181 aa). Residues 26-29, Ser-52, Ser-54, and 84-87 each bind NADP(+); these read YGSQ and DTAQ. His-109 is an active-site residue. An NADP(+)-binding site is contributed by Gly-135. A KARI C-terminal knotted domain is found at 184-329; that stretch reads TFTEETETDL…GRLRAMMSWV (146 aa). Residues Asp-192, Glu-196, Glu-228, and Glu-232 each coordinate Mg(2+). Ser-253 provides a ligand contact to substrate.

Belongs to the ketol-acid reductoisomerase family. Mg(2+) serves as cofactor.

The enzyme catalyses (2R)-2,3-dihydroxy-3-methylbutanoate + NADP(+) = (2S)-2-acetolactate + NADPH + H(+). It catalyses the reaction (2R,3R)-2,3-dihydroxy-3-methylpentanoate + NADP(+) = (S)-2-ethyl-2-hydroxy-3-oxobutanoate + NADPH + H(+). Its pathway is amino-acid biosynthesis; L-isoleucine biosynthesis; L-isoleucine from 2-oxobutanoate: step 2/4. The protein operates within amino-acid biosynthesis; L-valine biosynthesis; L-valine from pyruvate: step 2/4. In terms of biological role, involved in the biosynthesis of branched-chain amino acids (BCAA). Catalyzes an alkyl-migration followed by a ketol-acid reduction of (S)-2-acetolactate (S2AL) to yield (R)-2,3-dihydroxy-isovalerate. In the isomerase reaction, S2AL is rearranged via a Mg-dependent methyl migration to produce 3-hydroxy-3-methyl-2-ketobutyrate (HMKB). In the reductase reaction, this 2-ketoacid undergoes a metal-dependent reduction by NADPH to yield (R)-2,3-dihydroxy-isovalerate. The polypeptide is Ketol-acid reductoisomerase (NADP(+)) (Salinispora tropica (strain ATCC BAA-916 / DSM 44818 / JCM 13857 / NBRC 105044 / CNB-440)).